The sequence spans 104 residues: Large ribosomal subunit protein uL24 (104 aa).

The protein belongs to the universal ribosomal protein uL24 family. Part of the 50S ribosomal subunit.

In terms of biological role, one of two assembly initiator proteins, it binds directly to the 5'-end of the 23S rRNA, where it nucleates assembly of the 50S subunit. Functionally, one of the proteins that surrounds the polypeptide exit tunnel on the outside of the subunit. In Bradyrhizobium sp. (strain ORS 278), this protein is Large ribosomal subunit protein uL24.